A 520-amino-acid chain; its full sequence is MPRKKGAAWEEPSSGNGTARAGPRRRGGPAGRKRERPERCSSSSGGGSSGDEDGPELDGAPGGGKRTARPATAGKAAGAAAIITEPEHTKERVKLEGSKCKGQLLIFGATNWDLIGRKEVPKQQAAYRNLGQNLWGPHRYGCLSGVRVRTVVSGSCAAHSLLITTEGKLWSWGRNEKGQLGHGDTKRVEAPRLIEALSHEAIVLAACGRNHTLALTDTGSVFAFGENKMGQLGLGNQTDAVPSPAQIMYNGQPITKMACGAEFSMLMDCKGNLYSFGCPEYGQLGHNSDGKFIARAQRIEYDCELVPRRVAIFIEKTKDGQILPVPNVVVRDVACGANHTLVLDSQKRVFSWGFGGYGRLGHAEQKDEMVPRLVKLFDFPGRGATQIYAGYTCSFAVSEVGGLFFWGATNTSRESTMYPKAVQDLCGWRIRSLACGKSSIIVAADESTISWGPSPTFGELGYGDHKPKSSTAAQEVKTLDGIFSEQVAMGYSHSLVIARDESEAEKEKLQRLPEYTPRTL.

The interval 1 to 78 (MPRKKGAAWE…RPATAGKAAG (78 aa)) is disordered. The residue at position 14 (serine 14) is a Phosphoserine. At threonine 18 the chain carries Phosphothreonine. The segment covering 22 to 34 (GPRRRGGPAGRKR) has biased composition (basic residues). A phosphoserine mark is found at serine 41, serine 42, serine 43, serine 44, serine 48, and serine 49. The segment covering 69–78 (RPATAGKAAG) has biased composition (low complexity). Residues lysine 90 and lysine 122 each carry the N6-acetyllysine modification. RCC1 repeat units lie at residues 101-163 (KGQL…SLLI), 166-217 (EGKL…ALTD), 219-269 (GSVF…LMDC), 271-345 (GNLY…VLDS), 346-399 (QKRV…AVSE), 401-445 (GGLF…VAAD), and 446-499 (ESTI…VIAR). The residue at position 291 (lysine 291) is an N6-acetyllysine. The required for interaction with RAC1 stretch occupies residues 316–323 (KTKDGQIL). Threonine 340 bears the Phosphothreonine mark. Lysine 375 carries the N6-acetyllysine modification.

As to quaternary structure, interacts with RAC1. Interacts with nucleotide-free and with GDP and GTP-bound forms of RAC1, with a slight preference for GDP-bound RAC1. Binds preferentially to the nucleotide-free form of RAC1. Interacts with CORO1C. Interacts with microtubules.

Its subcellular location is the nucleus. The protein localises to the nucleolus. It is found in the cytoplasm. The protein resides in the cytoskeleton. It localises to the chromosome. Its subcellular location is the centromere. The protein localises to the spindle. It is found in the midbody. The protein resides in the cell membrane. In terms of biological role, multifunctional protein that may affect its functions by regulating the activity of small GTPases, such as RAC1 and RALA. Required for normal progress through the cell cycle, both during interphase and during mitosis. Required for the presence of normal levels of MAD2L1, AURKB and BIRC5 on inner centromeres during mitosis, and for normal attachment of kinetochores to mitotic spindles. Required for normal organization of the microtubule cytoskeleton in interphase cells. Functions as a guanine nucleotide exchange factor (GEF) for RALA. Interferes with the activation of RAC1 by guanine nucleotide exchange factors. Prevents accumulation of active, GTP-bound RAC1, and suppresses RAC1-mediated reorganization of the actin cytoskeleton and formation of membrane protrusions. Required for normal cellular responses to contacts with the extracellular matrix of adjacent cells, and for directional cell migration in response to a fibronectin gradient (in vitro). This is Protein RCC2 (Rcc2) from Mus musculus (Mouse).